Reading from the N-terminus, the 2527-residue chain is Neurogenic locus notch homolog protein 1 (2527 aa).

An N-terminal signal peptide occupies residues 1–36 (MGRSDSRAGALLEGGCEQNIDPRRAAHCHHPRLATS). The Extracellular portion of the chain corresponds to 37–1741 (SLRCSQPSGT…VEPPLPSQLH (1705 aa)). 33 disulfide bridges follow: C40-C53, C47-C62, C64-C73, C79-C90, C84-C103, C105-C114, C122-C133, C127-C143, C145-C154, C160-C171, C165-C180, C182-C191, C198-C211, C205-C220, C222-C231, C238-C249, C243-C259, C261-C270, C277-C288, C282-C297, C299-C308, C315-C328, C322-C337, C339-C348, C355-C366, C360-C375, C377-C386, C392-C403, C397-C414, C416-C425, C432-C445, C439-C454, and C456-C465. N57 carries N-linked (GlcNAc...) asparagine glycosylation. EGF-like domains lie at 75 to 115 (DPNP…PLCL), 118 to 155 (LDNACLANPCRNGGTCDLLTLTEYKCRCPPGWSGKSCQ), and 156 to 192 (QADPCASNPCANGGQCLPFESSYICGCPPGFHGPTCR). A glycan (O-linked (Glc...) serine) is linked at S81. T89 is a glycosylation site (O-linked (Fuc...) threonine). The O-linked (Fuc...) threonine glycan is linked to T132. Residue S162 is glycosylated (O-linked (Glc...) serine). Residues 194–232 (DVNECSQNPGLCRHGGTCHNEIGSYRCVCRATHTGPHCE) form the EGF-like 4; calcium-binding domain. An O-linked (Fuc...) threonine glycan is attached at T210. The EGF-like 5 domain maps to 234 to 271 (PYVPCSPSPCQNGGTCRPTGDTTHECACLPGFAGQNCE). Residue T248 is glycosylated (O-linked (Fuc...) threonine; alternate). An O-linked (GalNAc...) threonine; alternate glycan is attached at T248. The 37-residue stretch at 273–309 (NVDDCPGNNCKNGGACVDGVNTYNCRCPPEWTGQYCT) folds into the EGF-like 6; calcium-binding domain. The region spanning 311–349 (DVDECQLMPNACQNGGTCHNTHGGYNCVCVNGWTGEDCS) is the EGF-like 7; calcium-binding domain. An O-linked (Fuc...) threonine glycan is attached at T327. Residues 351–387 (NIDDCASAACFQGATCHDRVASFYCECPHGRTGLLCH) enclose the EGF-like 8; calcium-binding domain. The O-linked (Glc...) serine glycan is linked to S357. The O-linked (Fuc...) threonine glycan is linked to T365. The region spanning 388 to 426 (LNDACISNPCNEGSNCDTNPVNGKAICTCPSGYTGPACS) is the EGF-like 9 domain. O-linked (Glc...) serine glycosylation is present at S394. The 39-residue stretch at 428–466 (DVDECALGANPCEHAGKCLNTLGSFECQCLQGYTGPRCE) folds into the EGF-like 10; calcium-binding domain. The interaction with DLL4 stretch occupies residues 436–437 (AN). Ca(2+)-binding residues include T448 and S451. S451 carries an O-linked (Glc...) serine glycan. An interaction with DLL4 region spans residues 464–468 (RCEID). The Ca(2+) site is built by D468, V469, and E471. In terms of domain architecture, EGF-like 11; calcium-binding spans 468–504 (DVNECISNPCQNDATCLDQIGEFQCICMPGYEGVYCE). Intrachain disulfides connect C472/C483, C477/C492, and C494/C503. The O-linked (Glc...) serine glycan is linked to S474. An O-linked (Fuc...) threonine glycan is attached at T482. Residues D485 and Q486 each contribute to the Ca(2+) site. Residues N506, T507, and E509 each contribute to the Ca(2+) site. The 37-residue stretch at 506–542 (NTDECASSPCLHNGHCMDKINEFLCQCPKGFSGHLCQ) folds into the EGF-like 12; calcium-binding domain. 28 disulfide bridges follow: C510–C521, C515–C530, C532–C541, C548–C559, C553–C568, C570–C579, C586–C596, C591–C605, C607–C616, C623–C634, C628–C643, C645–C654, C661–C671, C666–C680, C682–C691, C698–C709, C703–C718, C720–C729, C736–C746, C741–C755, C757–C766, C773–C784, C778–C793, C795–C804, C811–C822, C816–C831, C833–C842, and C849–C860. The O-linked (Glc...) serine glycan is linked to S512. 2 residues coordinate Ca(2+): D523 and K524. Positions 544–580 (DVDECASTPCKNGAKCLDGPNTYTCVCTEGYTGTHCE) constitute an EGF-like 13; calcium-binding domain. The O-linked (Glc...) serine glycan is linked to S550. Residues 582 to 617 (DIDECDPDPCHYGFCKDGVATFTCLCQPGYTGHHCE) enclose the EGF-like 14; calcium-binding domain. Residues 619–655 (NINECHSQPCRHGGTCQDRDNSYLCLCLKGTTGPNCE) enclose the EGF-like 15; calcium-binding domain. A glycan (O-linked (Glc...) serine) is linked at S625. Residue T633 is glycosylated (O-linked (Fuc...) threonine). An EGF-like 16; calcium-binding domain is found at 657–692 (NLDDCASNPCDSGTCLDKIDGYECACEPGYTGSMCN). S663 carries O-linked (Glc...) serine glycosylation. The region spanning 694-730 (NIDECAGSPCHNGGTCEDGIAGFTCRCPEGYHDPTCL) is the EGF-like 17; calcium-binding domain. T708 carries O-linked (Fuc...) threonine glycosylation. One can recognise an EGF-like 18; calcium-binding domain in the interval 732-767 (EVNECNSNPCIHGACRDGLNGYKCDCAPGWSGTNCD). O-linked (Glc...) serine glycosylation is present at S738. One can recognise an EGF-like 19 domain in the interval 769–805 (NNNECESNPCVNGGTCKDMTSGYVCTCREGFSGPNCQ). A glycan (O-linked (Glc...) serine) is linked at S775. T783 carries an O-linked (Fuc...) threonine glycan. An O-linked (GlcNAc) serine glycan is attached at S800. Positions 807-843 (NINECASNPCLNQGTCIDDVAGYKCNCPLPYTGATCE) constitute an EGF-like 20; calcium-binding domain. A glycan (O-linked (Glc...) serine) is linked at S813. T821 is a glycosylation site (O-linked (Fuc...) threonine). The 39-residue stretch at 845–883 (VLAPCATSPCKNSGVCKESEDYESFSCVCPTGWQGQTCE) folds into the EGF-like 21 domain. Residues 885 to 921 (DINECVKSPCRHGASCQNTNGSYRCLCQAGYTGRNCE) form the EGF-like 22; calcium-binding domain. Residue N904 is glycosylated (N-linked (GlcNAc...) asparagine). T916 carries an O-linked (GlcNAc) threonine glycan. The region spanning 923–959 (DIDDCRPNPCHNGGSCTDGINMAFCDCLPGFQGAFCE) is the EGF-like 23 domain. O-linked (Fuc) serine glycosylation is present at S937. Positions 961–997 (DINECASNPCRNGANCTDCVDSYTCTCPAGFNGIHCE) constitute an EGF-like 24; calcium-binding domain. An O-linked (Glc...) serine glycan is attached at S967. N-linked (GlcNAc...) asparagine glycosylation occurs at N975. EGF-like domains follow at residues 999-1035 (NTPDCTESSCFNGGTCVDGINSFTCLCPPGFTGSYCQ), 1037-1073 (DVNECDSRPCLHGGTCQDSYGTYKCTCPQGYTGLNCQ), 1075-1111 (LVHWCDSAPCKNGGKCWQTNTQYHCECRSGWTGFNCD), 1113-1159 (LSVS…SYCE), and 1161-1197 (EVDECSPNPCQNGATCTDYLGGFSCKCVAGYHGSNCS). T1013 carries an O-linked (Fuc...) threonine glycan. Residue S1043 is glycosylated (O-linked (Glc...) serine). T1051 carries an O-linked (Fuc...) threonine glycan. S1081 carries an O-linked (Glc...) serine glycan. C1117 and C1138 are disulfide-bonded. T1175 carries an O-linked (Fuc...) threonine glycan. The N-linked (GlcNAc...) asparagine glycan is linked to N1195. Residues 1199–1235 (EINECLSQPCQNGGTCIDLTNTYKCSCPRGTQGVHCE) form the EGF-like 30; calcium-binding domain. S1205 is a glycosylation site (O-linked (Glc...) serine). The O-linked (Fuc...) threonine glycan is linked to T1213. The 45-residue stretch at 1237–1281 (NVDDCHPHLDPASRSPKCFNNGTCVDQVGGYSCTCPPGFVGERCE) folds into the EGF-like 31; calcium-binding domain. A glycan (N-linked (GlcNAc...) asparagine) is linked at N1257. EGF-like domains follow at residues 1283–1321 (DINECLSNPCDPRGTQDCVQRVNDFHCECRAGHTGRRCE), 1323–1362 (VINGCRGKPCKNGGVCAVASNTARGFICRCPAGFEGATCE), 1364–1400 (DARTCGSLRCLNGGTCISGPRSPTCLCLGSFTGPECQ), and 1403–1442 (ASSPCVGSNPCYNQGTCEPTSESPFYRCLCPAKFNGLLCH). S1289 carries an O-linked (Glc...) serine glycan. Residue T1378 is glycosylated (O-linked (Fuc...) threonine). The O-linked (GlcNAc...) threonine glycan is linked to T1395. An O-linked (Fuc...) threonine; alternate glycan is attached at T1418. A glycan (O-linked (GalNAc...) threonine; alternate) is linked at T1418. 3 LNR repeats span residues 1465–1505 (CELP…PWKN), 1506–1547 (CTQS…CNPL), and 1548–1587 (YDQYCKDHFSDGHCDQGCNSAECDWDGLDCADHVPERLAA). Ca(2+) is bound by residues D1473, N1476, D1491, and D1494. The N-linked (GlcNAc...) asparagine glycan is linked to N1505. Residue N1603 is glycosylated (N-linked (GlcNAc...) asparagine). T1731 is a glycosylation site (O-linked (GalNAc...) threonine). The interval 1734–1766 (PPLPSQLHLMYLAAAAFVLLFFVGCGVLLSRKR) is interaction with PSEN1. Residues 1742 to 1762 (LMYLAAAAFVLLFFVGCGVLL) traverse the membrane as a helical segment. Over 1763–2527 (SRKRRRQHGQ…QITHIPEAFK (765 aa)) the chain is Cytoplasmic. K1765 participates in a covalent cross-link: Glycyl lysine isopeptide (Lys-Gly) (interchain with G-Cter in ubiquitin). Residues 1786-1814 (KKKRREPLGEDSVGLKPLKNASDGALMDD) form a disordered region. The residue at position 1867 (T1867) is a Phosphothreonine. ANK repeat units lie at residues 1933–1962 (TGETALHLAARYSRSDAAKRLLEASADANI), 1966–1996 (MGRTPLHAAVSADAQGVFQILLRNRATDLDA), 2000–2029 (DGTTPLILAARLAVEGMLEDLINSHADVNA), 2033–2062 (LGKSALHWAAAVNNVDAAVVLLKNGANKDM), and 2066–2095 (KEETPLFLAAREGSYETAKVLLDHFANRDI). The HIF1AN-binding stretch occupies residues 1953-1961 (LLEASADAN). N1961 bears the (3S)-3-hydroxyasparagine; by HIF1AN; partial mark. The segment at 2020–2028 (LINSHADVN) is HIF1AN-binding. (3S)-3-hydroxyasparagine; by HIF1AN is present on N2028. Disordered stretches follow at residues 2157-2201 (SATQ…DSSS), 2378-2424 (QPQN…SLPV), and 2436-2527 (PTSL…EAFK). Residues 2378–2391 (QPQNLQPPSQPHLS) show a composition bias toward low complexity. The span at 2436 to 2474 (PTSLPSSMVPPMTTTQFLTPPSQHSYSSSPVDNTPSHQL) shows a compositional bias: polar residues. The segment covering 2484-2499 (PSPESPDQWSSSSPHS) has biased composition (low complexity). Positions 2500–2520 (NISDWSEGISSPPTSMPSQIT) are enriched in polar residues.

The protein belongs to the NOTCH family. In terms of assembly, heterodimer of a C-terminal fragment N(TM) and an N-terminal fragment N(EC) which are probably linked by disulfide bonds. Interacts with DNER, DTX1, DTX2 and RBPJ/RBPSUH. Also interacts with MAML1, MAML2 and MAML3 which act as transcriptional coactivators for NOTCH1. Notch 1 intracellular domain interacts with SNW1; the interaction involves multimerized NOTCH1 NICD and is implicated in a formation of an intermediate preactivation complex which associates with DNA-bound CBF-1/RBPJ. The activated membrane-bound form interacts with AAK1 which promotes NOTCH1 stabilization. Forms a trimeric complex with FBXW7 and SGK1. Interacts with HIF1AN. HIF1AN negatively regulates the function of notch intracellular domain (NICD), accelerating myogenic differentiation. Interacts (via NICD) with SNAI1 (via zinc fingers); the interaction induces SNAI1 degradation via MDM2-mediated ubiquitination and inhibits SNAI1-induced cell invasion. Interacts (via NICD) with MDM2A. Interacts (via NICD) with BCL6; the interaction decreases MAML1 recruitment by NOTCH1 NICD on target genes DNA and inhibits NOTCH1 transactivation activity. Interacts with THBS4. Interacts (via the EGF-like repeat region) with CCN3 (via CTCK domain). Interacts (via EGF-like domains) with DLL4 (via N-terminal DSL and MNNL domains). Interacts with ZMIZ1. Interacts (via NICD domain) with MEGF10 (via the cytoplasmic domain). Interacts with DLL1 and JAG1. Interacts (via NICD domain) with PRAG1. Forms a complex with PRAG1, N1ICD and MAML1, in a MAML1-dependent manner. Interacts (via transmembrane region) with PSEN1; the interaction is direct. Interacts with ZFP64. In terms of processing, synthesized in the endoplasmic reticulum as an inactive form which is proteolytically cleaved by a furin-like convertase in the trans-Golgi network before it reaches the plasma membrane to yield an active, ligand-accessible form. Cleavage results in a C-terminal fragment N(TM) and a N-terminal fragment N(EC). Following ligand binding, it is cleaved by ADAM17 to yield a membrane-associated intermediate fragment called notch extracellular truncation (NEXT). Following endocytosis, this fragment is then cleaved by one of the catalytic subunits of gamma-secretase (PSEN1 or PSEN2) to release a Notch-derived peptide containing the intracellular domain (NICD) from the membrane. Post-translationally, phosphorylated. O-linked glycosylation by GALNT11 is involved in determination of left/right symmetry: glycosylation promotes activation of NOTCH1, possibly by promoting cleavage by ADAM17, modulating the balance between motile and immotile (sensory) cilia at the left-right organiser (LRO). O-glycosylated on the EGF-like domains. O-glucosylated at Ser-451 by KDELC1 and KDELC2. Contains both O-linked fucose and O-linked glucose in the EGF-like domains 11, 12 and 13, which are interacting with the residues on DLL4. MFNG-, RFNG- and LFNG-mediated modification of O-fucose residues at specific EGF-like domains results in inhibition of its activation by JAG1 and enhancement of its activation by DLL1 via an increased binding to DLL1. In terms of processing, ubiquitinated. Undergoes 'Lys-29'-linked polyubiquitination by ITCH; promotes the lysosomal degradation of non-activated internalized NOTCH1. Deubiquitination by USP12 is required for transport of internalized non-activated receptor from late endosomes to lysosomes for degradation. Monoubiquitination at Lys-1765 is required for activation by gamma-secretase cleavage, it promotes interaction with AAK1, which stabilizes it. Deubiquitination by EIF3F is necessary for nuclear import of activated Notch. Post-translationally, hydroxylated at Asn-1961 by HIF1AN. Hydroxylated at Asn-2028 by HIF1AN. Hydroxylation reduces affinity for HI1AN and may thus indirectly modulate negative regulation of NICD.

The protein localises to the cell membrane. It is found in the late endosome membrane. It localises to the nucleus. Its function is as follows. Functions as a receptor for membrane-bound ligands Jagged-1 (JAG1), Jagged-2 (JAG2) and Delta-1 (DLL1) to regulate cell-fate determination. Upon ligand activation through the released notch intracellular domain (NICD) it forms a transcriptional activator complex with RBPJ/RBPSUH and activates genes of the enhancer of split locus. Affects the implementation of differentiation, proliferation and apoptotic programs. Involved in angiogenesis; negatively regulates endothelial cell proliferation and migration and angiogenic sprouting. Involved in the maturation of both CD4(+) and CD8(+) cells in the thymus. Important for follicular differentiation and possibly cell fate selection within the follicle. During cerebellar development, functions as a receptor for neuronal DNER and is involved in the differentiation of Bergmann glia. Represses neuronal and myogenic differentiation. May play an essential role in postimplantation development, probably in some aspect of cell specification and/or differentiation. May be involved in mesoderm development, somite formation and neurogenesis. May enhance HIF1A function by sequestering HIF1AN away from HIF1A. Required for the THBS4 function in regulating protective astrogenesis from the subventricular zone (SVZ) niche after injury. Involved in determination of left/right symmetry by modulating the balance between motile and immotile (sensory) cilia at the left-right organiser (LRO). This chain is Neurogenic locus notch homolog protein 1 (NOTCH1), found in Cricetulus griseus (Chinese hamster).